Reading from the N-terminus, the 565-residue chain is MITPQQPSGMPIEKYRPFPAVALPDRTWPNATITEAPRWCSVDLRDGNQALIDPMTPSRKMQLFELLVAMGYKEIEVGFPAASQTDFDFVRQLIEDDLIPDDVTIQVLTQAREELIERTVTSLVGSDRALIHLYNSTSTLQRRVVFGLDRAGVTDIAVQGARWCAQYAEKLLEGTDVRWQYSPESFTGTELDYALEVCEAVMDVWAPTPDNPVVLNLPATVEMSTPNVYADQIEWMSRNLTRRDAVVLSLHPHNDRGCAVAAAELGVMAGADRVEGCLFGNGERTGNVCLVTLGMNLFSQGIDPMIDLSDIDGVRRTVEYCNQLPVHPRHPYGGDLVYTAFSGSHQDAIKKGFEAMERTGQTLWEVPYLPIDPKDVGRSYEAVIRVNSQSGKGGVAYLMKSEYALDLPRRLQIEFSGVVQKHTDDAGGEVTAGQLWEIFTREYRPEGGDPAASLELLGSRTTAASGARDEVTVSVRLDGTETVITGSGNGPIDAFVAALSERGVPVRVLDYNEHALGSGADARAAAYLEVAVGETVLWGVGIDPNIVTASLRAVVSAVNRASRES.

In terms of domain architecture, Pyruvate carboxyltransferase spans 37–312 (PRWCSVDLRD…DPMIDLSDID (276 aa)). Mg(2+) is bound by residues aspartate 46, histidine 251, histidine 253, and asparagine 287. The interval 446–565 (EGGDPAASLE…SAVNRASRES (120 aa)) is regulatory domain.

This sequence belongs to the alpha-IPM synthase/homocitrate synthase family. LeuA type 2 subfamily. As to quaternary structure, homodimer. Mg(2+) serves as cofactor.

It is found in the cytoplasm. It carries out the reaction 3-methyl-2-oxobutanoate + acetyl-CoA + H2O = (2S)-2-isopropylmalate + CoA + H(+). It functions in the pathway amino-acid biosynthesis; L-leucine biosynthesis; L-leucine from 3-methyl-2-oxobutanoate: step 1/4. Its function is as follows. Catalyzes the condensation of the acetyl group of acetyl-CoA with 3-methyl-2-oxobutanoate (2-ketoisovalerate) to form 3-carboxy-3-hydroxy-4-methylpentanoate (2-isopropylmalate). This chain is 2-isopropylmalate synthase, found in Parafrankia sp. (strain EAN1pec).